Reading from the N-terminus, the 414-residue chain is Tryptophan synthase beta chain (414 aa).

The tract at residues 1–26 (MVSTFSRKNQNYKKDDLNQPSKDGRF) is disordered. The span at 12–26 (YKKDDLNQPSKDGRF) shows a compositional bias: basic and acidic residues. Lys-109 is modified (N6-(pyridoxal phosphate)lysine).

The protein belongs to the TrpB family. Tetramer of two alpha and two beta chains. Requires pyridoxal 5'-phosphate as cofactor.

It catalyses the reaction (1S,2R)-1-C-(indol-3-yl)glycerol 3-phosphate + L-serine = D-glyceraldehyde 3-phosphate + L-tryptophan + H2O. The protein operates within amino-acid biosynthesis; L-tryptophan biosynthesis; L-tryptophan from chorismate: step 5/5. In terms of biological role, the beta subunit is responsible for the synthesis of L-tryptophan from indole and L-serine. This is Tryptophan synthase beta chain from Prochlorococcus marinus (strain MIT 9215).